Reading from the N-terminus, the 497-residue chain is Glycerol kinase (497 aa).

Position 12 (T12) interacts with ADP. Positions 12, 13, and 14 each coordinate ATP. T12 serves as a coordination point for sn-glycerol 3-phosphate. ADP is bound at residue R16. Sn-glycerol 3-phosphate contacts are provided by R82, E83, Y134, and D243. 5 residues coordinate glycerol: R82, E83, Y134, D243, and Q244. ADP is bound by residues T265 and G308. ATP is bound by residues T265, G308, Q312, and G409. Residues G409 and N413 each contribute to the ADP site.

Belongs to the FGGY kinase family.

The enzyme catalyses glycerol + ATP = sn-glycerol 3-phosphate + ADP + H(+). It functions in the pathway polyol metabolism; glycerol degradation via glycerol kinase pathway; sn-glycerol 3-phosphate from glycerol: step 1/1. Its activity is regulated as follows. Inhibited by fructose 1,6-bisphosphate (FBP). Functionally, key enzyme in the regulation of glycerol uptake and metabolism. Catalyzes the phosphorylation of glycerol to yield sn-glycerol 3-phosphate. In Nitratidesulfovibrio vulgaris (strain ATCC 29579 / DSM 644 / CCUG 34227 / NCIMB 8303 / VKM B-1760 / Hildenborough) (Desulfovibrio vulgaris), this protein is Glycerol kinase.